A 415-amino-acid polypeptide reads, in one-letter code: Gamma-glutamyl phosphate reductase (415 aa).

Belongs to the gamma-glutamyl phosphate reductase family.

Its subcellular location is the cytoplasm. The enzyme catalyses L-glutamate 5-semialdehyde + phosphate + NADP(+) = L-glutamyl 5-phosphate + NADPH + H(+). It participates in amino-acid biosynthesis; L-proline biosynthesis; L-glutamate 5-semialdehyde from L-glutamate: step 2/2. Functionally, catalyzes the NADPH-dependent reduction of L-glutamate 5-phosphate into L-glutamate 5-semialdehyde and phosphate. The product spontaneously undergoes cyclization to form 1-pyrroline-5-carboxylate. The protein is Gamma-glutamyl phosphate reductase of Desulforamulus reducens (strain ATCC BAA-1160 / DSM 100696 / MI-1) (Desulfotomaculum reducens).